Consider the following 406-residue polypeptide: Histone-lysine N-methyltransferase SUV39H2 (406 aa).

Residues 43–101 (YEVEYLCDYRIEKGVEKFFVKWKGWPESCNTWEPTRNLKCPTLLKQFYSDLYNYFCALK) form the Chromo domain. Positions 185–243 (VGCDCSDCFKGKCCPTEAGVLFAYNEHRQIKIPPGRPIYECNSRCKCGPDCPNRVVQKG) constitute a Pre-SET domain. Zn(2+) contacts are provided by Cys187, Cys189, Cys192, Cys197, Cys198, Cys225, Cys229, Cys231, and Cys235. Positions 246–369 (YSLCIFRTDN…AGEELTFDYQ (124 aa)) constitute an SET domain. S-adenosyl-L-methionine-binding positions include 257–259 (RGW), Tyr300, and 326–327 (NH). Cys329, Cys394, Cys396, and Cys401 together coordinate Zn(2+). Residues 390 to 406 (VRIACKCGAATCRGYLN) form the Post-SET domain.

It belongs to the class V-like SAM-binding methyltransferase superfamily. Histone-lysine methyltransferase family. Suvar3-9 subfamily.

The protein resides in the nucleus. The protein localises to the chromosome. It localises to the centromere. It carries out the reaction L-lysyl(9)-[histone H3] + 3 S-adenosyl-L-methionine = N(6),N(6),N(6)-trimethyl-L-lysyl(9)-[histone H3] + 3 S-adenosyl-L-homocysteine + 3 H(+). In terms of biological role, histone methyltransferase that specifically trimethylates 'Lys-9' of histone H3 using monomethylated H3 'Lys-9' as substrate. H3 'Lys-9' trimethylation represents a specific tag for epigenetic transcriptional repression by recruiting HP1 (CBX1, CBX3 and/or CBX5) proteins to methylated histones. Mainly functions in heterochromatin regions, thereby playing a central role in the establishment of constitutive heterochromatin at pericentric and telomere regions. H3 'Lys-9' trimethylation is also required to direct DNA methylation at pericentric repeats. SUV39H1 is targeted to histone H3 via its interaction with RB1 and is involved in many processes. This chain is Histone-lysine N-methyltransferase SUV39H2 (suv39h2), found in Xenopus tropicalis (Western clawed frog).